The sequence spans 422 residues: Enolase (422 aa).

Position 162 (glutamine 162) interacts with (2R)-2-phosphoglycerate. Catalysis depends on glutamate 204, which acts as the Proton donor. Residues aspartate 241, glutamate 284, and aspartate 311 each contribute to the Mg(2+) site. 4 residues coordinate (2R)-2-phosphoglycerate: lysine 336, arginine 365, serine 366, and lysine 387. Catalysis depends on lysine 336, which acts as the Proton acceptor.

Belongs to the enolase family. As to quaternary structure, component of the RNA degradosome, a multiprotein complex involved in RNA processing and mRNA degradation. Mg(2+) serves as cofactor.

The protein localises to the cytoplasm. It is found in the secreted. The protein resides in the cell surface. The enzyme catalyses (2R)-2-phosphoglycerate = phosphoenolpyruvate + H2O. It participates in carbohydrate degradation; glycolysis; pyruvate from D-glyceraldehyde 3-phosphate: step 4/5. Its function is as follows. Catalyzes the reversible conversion of 2-phosphoglycerate (2-PG) into phosphoenolpyruvate (PEP). It is essential for the degradation of carbohydrates via glycolysis. This chain is Enolase, found in Legionella pneumophila (strain Corby).